The following is a 209-amino-acid chain: Claudin-4 (209 aa).

Topologically, residues Met1–Thr9 are cytoplasmic. The interval Met1–Lys103 is interaction with EPHA2. A helical transmembrane segment spans residues Gly10 to Trp30. The Extracellular portion of the chain corresponds to Arg31 to Arg81. An intrachain disulfide couples Cys54 to Cys64. Residues Ala82–Gly102 form a helical membrane-spanning segment. The Cytoplasmic segment spans residues Lys103 to Thr117. Residues Met118–Trp138 form a helical membrane-spanning segment. Over Thr139–Met160 the chain is Extracellular. The chain crosses the membrane as a helical span at residues Gly161–Leu181. At Cys182–Val209 the chain is on the cytoplasmic side. At Tyr208 the chain carries Phosphotyrosine; by EPHA2. Residues Tyr208 to Val209 are interactions with TJP1, TJP2 and TJP3.

It belongs to the claudin family. In terms of assembly, interacts with EPHA2; phosphorylates CLDN4 and may regulate tight junctions. Directly interacts with TJP1/ZO-1, TJP2/ZO-2 and TJP3/ZO-3. Interacts with CLDN1. Interacts with CLDN8. In terms of processing, phosphorylated. Phosphorylation by EPHA2 is stimulated by EFNA1 and alters interaction with TJP1.

Its subcellular location is the cell junction. The protein resides in the tight junction. The protein localises to the cell membrane. Channel-forming tight junction protein that mediates paracellular chloride transport in the kidney. Plays a critical role in the paracellular reabsorption of filtered chloride in the kidney collecting ducts. Claudins play a major role in tight junction-specific obliteration of the intercellular space, through calcium-independent cell-adhesion activity. This is Claudin-4 (CLDN4) from Chlorocebus aethiops (Green monkey).